A 510-amino-acid polypeptide reads, in one-letter code: NAD(P)H-quinone oxidoreductase subunit 2 A, chloroplastic (510 aa).

13 helical membrane passes run 24–44, 57–77, 99–119, 124–144, 149–169, 183–203, 227–247, 295–315, 323–343, 354–374, 395–415, 418–438, and 484–504; these read LLLF…GLIL, IPWL…ALLF, IFQF…VEYI, MAIT…MFLC, LITI…LSGY, YLLM…WLYG, PGIS…LSPA, WHLL…LIAI, MLAY…IVGD, YMLF…LFGL, ALSL…AGFF, LYLF…IGLL, and MIVC…IIAI.

This sequence belongs to the complex I subunit 2 family. NDH is composed of at least 16 different subunits, 5 of which are encoded in the nucleus.

It is found in the plastid. Its subcellular location is the chloroplast thylakoid membrane. The enzyme catalyses a plastoquinone + NADH + (n+1) H(+)(in) = a plastoquinol + NAD(+) + n H(+)(out). The catalysed reaction is a plastoquinone + NADPH + (n+1) H(+)(in) = a plastoquinol + NADP(+) + n H(+)(out). In terms of biological role, NDH shuttles electrons from NAD(P)H:plastoquinone, via FMN and iron-sulfur (Fe-S) centers, to quinones in the photosynthetic chain and possibly in a chloroplast respiratory chain. The immediate electron acceptor for the enzyme in this species is believed to be plastoquinone. Couples the redox reaction to proton translocation, and thus conserves the redox energy in a proton gradient. This Solanum tuberosum (Potato) protein is NAD(P)H-quinone oxidoreductase subunit 2 A, chloroplastic.